Consider the following 93-residue polypeptide: Phosphoribosyl-ATP pyrophosphatase (93 aa).

Belongs to the PRA-PH family.

It localises to the cytoplasm. The enzyme catalyses 1-(5-phospho-beta-D-ribosyl)-ATP + H2O = 1-(5-phospho-beta-D-ribosyl)-5'-AMP + diphosphate + H(+). It functions in the pathway amino-acid biosynthesis; L-histidine biosynthesis; L-histidine from 5-phospho-alpha-D-ribose 1-diphosphate: step 2/9. The polypeptide is Phosphoribosyl-ATP pyrophosphatase (Mycolicibacterium gilvum (strain PYR-GCK) (Mycobacterium gilvum (strain PYR-GCK))).